The sequence spans 729 residues: E3 ubiquitin-protein ligase SH3RF2 (729 aa).

The segment at 12–53 adopts an RING-type zinc-finger fold; it reads CPVCFEKLDVTAKVLPCQHTFCKPCLQRVFKAHKELRCPECR. The tract at residues 78–105 is disordered; it reads SGQSSGRGGSFRRPGTMTLQDGRKSRTN. 2 SH3 domains span residues 125-184 and 187-252; these read DGVP…VIKQ and QPPP…PNLT. Positions 258 to 297 are disordered; the sequence is EKNKGRQSSRTKNLSLVSSSSRGNTSTLRRGPGSRRKVPG. The segment covering 263-285 has biased composition (polar residues); that stretch reads RQSSRTKNLSLVSSSSRGNTSTL. Positions 370 to 459 are interaction with PAK4; sequence VVSLPGSQQH…RSPGLYTTWT (90 aa). Positions 380–441 constitute an SH3 3 domain; the sequence is LSANMFVALH…PNNYVIPIFR (62 aa). Disordered regions lie at residues 497–526 and 610–677; these read STAG…QRPL and KSEP…SQPE. A compositionally biased stretch (polar residues) spans 517-526; that stretch reads RKNGSLQRPL. The tract at residues 641–646 is interaction with PPP1CA; it reads KTVRFQ. Serine 649 is modified (phosphoserine).

Belongs to the SH3RF family. As to quaternary structure, interacts with FASLG and PPP1CA. Interacts with PAK4 and TNFRSF1A. Interacts with DLK1, MAP3K10/MLK2, MAPK8IP1/JIP1, MAPK8IP2/JIP2 and MAPK8IP3/JIP3. Interacts with RAC1 (both active GTP- or inactive GDP-bound forms). In terms of processing, autoubiquitinated. In terms of tissue distribution, heart (at protein level). Up-regulated in colon cancer tissues as compared to normal colon tissues (at protein level). Testis. In the heart, present in the apex, left atrium, right atrium, left ventricle and right ventricle, but not in the aorta.

It is found in the nucleus. The catalysed reaction is S-ubiquitinyl-[E2 ubiquitin-conjugating enzyme]-L-cysteine + [acceptor protein]-L-lysine = [E2 ubiquitin-conjugating enzyme]-L-cysteine + N(6)-ubiquitinyl-[acceptor protein]-L-lysine.. It functions in the pathway protein modification; protein ubiquitination. Its function is as follows. Has E3 ubiquitin-protein ligase activity. Acts as an anti-apoptotic regulator of the JNK pathway by ubiquitinating and promoting the degradation of SH3RF1, a scaffold protein that is required for pro-apoptotic JNK activation. Facilitates TNF-alpha-mediated recruitment of adapter proteins TRADD and RIPK1 to TNFRSF1A and regulates PAK4 protein stability via inhibition of its ubiquitin-mediated proteasomal degradation. Inhibits PPP1CA phosphatase activity. This Homo sapiens (Human) protein is E3 ubiquitin-protein ligase SH3RF2 (SH3RF2).